Here is a 376-residue protein sequence, read N- to C-terminus: MSCVDCRFAPACVTVRTRNLCENCFIRFLQTKVLRRMERYRLRNAPKDRQRKLILPLSYGVSSLALLHIVSSLLLKQRTTGQKRTAFDLHVLIVDPVSLHPSKGAAASGRLAKIKEAYPDNTYSEVPLRSIFDYDPDIRGDISQHTGIPLGSNPSRSDEEILNLFRASFSTATARADIDGILLRRLIVAFAKSHKCDGILWGDSDSRLAAKTLANVAKGRGSSLVWNVCEGMSPWDIYFNFPLRDLYKSELEVYASYALRDLQQIIDQDPRNFEDLSNRHMSIEDLMSQYVLTQGAKYPGVMANIVRTVDKLTTPGVENAKMCILCRVPAGENLNAASGSQMDIGSNGETTTVPRSTCYGCMRTLLDMKAPTSNSG.

This sequence belongs to the CTU2/NCS2 family.

It is found in the cytoplasm. Its pathway is tRNA modification; 5-methoxycarbonylmethyl-2-thiouridine-tRNA biosynthesis. Plays a central role in 2-thiolation of mcm(5)S(2)U at tRNA wobble positions of tRNA(Lys), tRNA(Glu) and tRNA(Gln). May act by forming a heterodimer with NCS6 that ligates sulfur from thiocarboxylated URM1 onto the uridine of tRNAs at wobble position. Prior mcm(5) tRNA modification by the elongator complex is required for 2-thiolation. May also be involved in protein urmylation. The chain is Cytoplasmic tRNA 2-thiolation protein 2 from Coccidioides immitis (strain RS) (Valley fever fungus).